Consider the following 99-residue polypeptide: MNPINYLYLSALLFTIGAAGVLLRRNAIVMFMCVELMLNAVNLAFVTFARMHGHLDGQMIAFFTMVVAACEVVIGLAIIMTIFRTRKSASVDDANLLKG.

The next 3 helical transmembrane spans lie at 3–23 (PINY…GVLL), 28–48 (IVMF…FVTF), and 59–79 (MIAF…LAII).

The protein belongs to the complex I subunit 4L family. As to quaternary structure, NDH-1 is composed of 14 different subunits. Subunits NuoA, H, J, K, L, M, N constitute the membrane sector of the complex.

The protein localises to the cell membrane. It carries out the reaction a quinone + NADH + 5 H(+)(in) = a quinol + NAD(+) + 4 H(+)(out). Its function is as follows. NDH-1 shuttles electrons from NADH, via FMN and iron-sulfur (Fe-S) centers, to quinones in the respiratory chain. The immediate electron acceptor for the enzyme in this species is believed to be a menaquinone. Couples the redox reaction to proton translocation (for every two electrons transferred, four hydrogen ions are translocated across the cytoplasmic membrane), and thus conserves the redox energy in a proton gradient. The protein is NADH-quinone oxidoreductase subunit K of Mycobacterium avium (strain 104).